Reading from the N-terminus, the 94-residue chain is Pyrimidine/purine nucleoside phosphorylase (94 aa).

This sequence belongs to the nucleoside phosphorylase PpnP family.

The catalysed reaction is a purine D-ribonucleoside + phosphate = a purine nucleobase + alpha-D-ribose 1-phosphate. It catalyses the reaction adenosine + phosphate = alpha-D-ribose 1-phosphate + adenine. It carries out the reaction cytidine + phosphate = cytosine + alpha-D-ribose 1-phosphate. The enzyme catalyses guanosine + phosphate = alpha-D-ribose 1-phosphate + guanine. The catalysed reaction is inosine + phosphate = alpha-D-ribose 1-phosphate + hypoxanthine. It catalyses the reaction thymidine + phosphate = 2-deoxy-alpha-D-ribose 1-phosphate + thymine. It carries out the reaction uridine + phosphate = alpha-D-ribose 1-phosphate + uracil. The enzyme catalyses xanthosine + phosphate = alpha-D-ribose 1-phosphate + xanthine. Its function is as follows. Catalyzes the phosphorolysis of diverse nucleosides, yielding D-ribose 1-phosphate and the respective free bases. Can use uridine, adenosine, guanosine, cytidine, thymidine, inosine and xanthosine as substrates. Also catalyzes the reverse reactions. The chain is Pyrimidine/purine nucleoside phosphorylase from Vibrio parahaemolyticus serotype O3:K6 (strain RIMD 2210633).